The sequence spans 657 residues: Methionine--tRNA ligase (657 aa).

Residues 13-23 carry the 'HIGH' region motif; the sequence is YYPSGNLHIGH. Positions 308-312 match the 'KMSKS' region motif; that stretch reads KMSKS. Lys-311 is a binding site for ATP. The region spanning 557-657 is the tRNA-binding domain; that stretch reads DFDKVEIKAA…SAIPNGAVIK (101 aa).

It belongs to the class-I aminoacyl-tRNA synthetase family. MetG type 2B subfamily. Homodimer.

Its subcellular location is the cytoplasm. The catalysed reaction is tRNA(Met) + L-methionine + ATP = L-methionyl-tRNA(Met) + AMP + diphosphate. Is required not only for elongation of protein synthesis but also for the initiation of all mRNA translation through initiator tRNA(fMet) aminoacylation. This Staphylococcus aureus (strain Mu50 / ATCC 700699) protein is Methionine--tRNA ligase.